We begin with the raw amino-acid sequence, 91 residues long: Small ribosomal subunit protein uS19 (91 aa).

This sequence belongs to the universal ribosomal protein uS19 family.

Its function is as follows. Protein S19 forms a complex with S13 that binds strongly to the 16S ribosomal RNA. This is Small ribosomal subunit protein uS19 from Pseudomonas syringae pv. syringae (strain B728a).